A 228-amino-acid polypeptide reads, in one-letter code: 2-C-methyl-D-erythritol 4-phosphate cytidylyltransferase (228 aa).

It belongs to the IspD/TarI cytidylyltransferase family. IspD subfamily.

It catalyses the reaction 2-C-methyl-D-erythritol 4-phosphate + CTP + H(+) = 4-CDP-2-C-methyl-D-erythritol + diphosphate. Its pathway is isoprenoid biosynthesis; isopentenyl diphosphate biosynthesis via DXP pathway; isopentenyl diphosphate from 1-deoxy-D-xylulose 5-phosphate: step 2/6. Its function is as follows. Catalyzes the formation of 4-diphosphocytidyl-2-C-methyl-D-erythritol from CTP and 2-C-methyl-D-erythritol 4-phosphate (MEP). This Geobacillus kaustophilus (strain HTA426) protein is 2-C-methyl-D-erythritol 4-phosphate cytidylyltransferase.